We begin with the raw amino-acid sequence, 854 residues long: Aryl hydrocarbon receptor (854 aa).

Residues 1-9 constitute a propeptide that is removed on maturation; the sequence is MSSGANITY. Positions 1 to 38 are disordered; that stretch reads MSSGANITYASRKRRKPVQKTVKPIPAEGIKSNPSKRH. 2 short sequence motifs (nuclear localization signal) span residues 12–15 and 36–41; these read RKRR and KRHRDR. The bHLH domain maps to 26–79; it reads PAEGIKSNPSKRHRDRLNTELDRLASLLPFPQDVINKLDKLSVLRLSVSYLRAK. The tract at residues 37-65 is DNA-binding; sequence RHRDRLNTELDRLASLLPFPQDVINKLDK. Required for maintaining the overall integrity of the AHR:ARNT heterodimer and its transcriptional activity stretches follow at residues 49–81, 116–124, and 264–266; these read LASL…AKSF, LLQALNGFV, and FAI. The Nuclear export signal motif lies at 63–71; the sequence is LDKLSVLRL. A PAS 1 domain is found at 111-175; it reads QEGEFLLQAL…AEFQRQLHWA (65 aa). Positions 270-340 constitute a PAS 2 domain; the sequence is LQPPSILEIR…CAESHIRMIK (71 aa). One can recognise a PAC domain in the interval 346-387; the sequence is MTVFRLLAKHSRWRWVQSNARLIYRNGRPDYIIATQRPLTDE. The interval 425–452 is disordered; sequence LPIRTKSNTSRKDWAPQSTPSKDSFHPS. The segment covering 440 to 452 has biased composition (polar residues); sequence PQSTPSKDSFHPS.

As to quaternary structure, homodimer. Heterodimer; efficient DNA binding requires dimerization with another bHLH protein. Interacts with ARNT; the heterodimer ARNT:AHR binds to core DNA sequence 5'-TGCGTG-3' within the dioxin response element (DRE) of target gene promoters and activates their transcription. Binds MYBBP1A. Interacts with coactivators including SRC-1, RIP140 and NOCA7, and with the corepressor SMRT. Interacts with NEDD8 and IVNS1ABP. Interacts with BMAL1. Interacts with HSP90AB1. Interacts with TIPARP; leading to mono-ADP-ribosylation of AHR and subsequent inhibition of AHR. Post-translationally, mono-ADP-ribosylated, leading to inhibit transcription activator activity of AHR.

The protein localises to the cytoplasm. It is found in the nucleus. Its function is as follows. Ligand-activated transcription factor that enables cells to adapt to changing conditions by sensing compounds from the environment, diet, microbiome and cellular metabolism, and which plays important roles in development, immunity and cancer. Upon ligand binding, translocates into the nucleus, where it heterodimerizes with ARNT and induces transcription by binding to xenobiotic response elements (XRE). Regulates a variety of biological processes, including angiogenesis, hematopoiesis, drug and lipid metabolism, cell motility and immune modulation. Xenobiotics can act as ligands: upon xenobiotic-binding, activates the expression of multiple phase I and II xenobiotic chemical metabolizing enzyme genes (such as the CYP1A1 gene). Mediates biochemical and toxic effects of halogenated aromatic hydrocarbons. Next to xenobiotics, natural ligands derived from plants, microbiota, and endogenous metabolism are potent AHR agonists. Tryptophan (Trp) derivatives constitute an important class of endogenous AHR ligands. Acts as a negative regulator of anti-tumor immunity: indoles and kynurenic acid generated by Trp catabolism act as ligand and activate AHR, thereby promoting AHR-driven cancer cell motility and suppressing adaptive immunity. Regulates the circadian clock by inhibiting the basal and circadian expression of the core circadian component PER1. Inhibits PER1 by repressing the CLOCK-BMAL1 heterodimer mediated transcriptional activation of PER1. The heterodimer ARNT:AHR binds to core DNA sequence 5'-TGCGTG-3' within the dioxin response element (DRE) of target gene promoters and activates their transcription. This Mus spretus (Western Mediterranean mouse) protein is Aryl hydrocarbon receptor (Ahr).